Here is a 520-residue protein sequence, read N- to C-terminus: Developmental regulatory protein wetA (520 aa).

5 disordered regions span residues 49-72 (GDLPPTVSTPKRHQSPQPWSNEWS), 104-165 (VPSR…MRSS), 236-295 (QSPS…WQSD), 367-453 (DHSF…GSNK), and 471-496 (LTGVAPSGSSKTKARREQEARDRRRK). Polar residues-rich tracts occupy residues 63-72 (SPQPWSNEWS), 104-114 (VPSRPTASHGL), and 155-165 (QSFSPSLMRSS). The span at 237 to 251 (SPSVSMPSPSIAMSA) shows a compositional bias: low complexity. The span at 252–261 (RQQQHYIAQP) shows a compositional bias: polar residues. Over residues 262–295 (SSSSLTNSSPSSADDIFSSSHSSDPHSLSSWQSD) the composition is skewed to low complexity. The span at 367–401 (DHSFSSSNMLPATPQKFDTSFNTSQVHNVSRSPSL) shows a compositional bias: polar residues. Positions 420 to 429 (PTHRRTHSRK) are enriched in basic residues. Low complexity predominate over residues 436–453 (NAPKPAKASGSSSRGSNK).

It belongs to the wetA family.

Functionally, brlA, abaA and wetA are pivotal regulators of conidiophore development and conidium maturation. They act individually and together to regulate their own expression and that of numerous other sporulation-specific genes. Responsible for activating a set of genes whose products make up the final two conidial wall layers or direct their assembly and though this activity is responsible for acquisition of spore dormancy. The sequence is that of Developmental regulatory protein wetA from Penicillium rubens (strain ATCC 28089 / DSM 1075 / NRRL 1951 / Wisconsin 54-1255) (Penicillium chrysogenum).